Here is a 309-residue protein sequence, read N- to C-terminus: NADH-cytochrome b5 reductase 1 (309 aa).

A helical transmembrane segment spans residues 30 to 50 (FVPYAVALTAILAGLKLFTGG). The FAD-binding FR-type domain occupies 60-165 (TEFQEFVLKE…RGPKGAMVYT (106 aa)). Residues 145 to 160 (TTLK…GPKG) and 171 to 208 (HIGM…KLDL) each bind FAD.

Belongs to the flavoprotein pyridine nucleotide cytochrome reductase family. As to quaternary structure, monomer. Component of the 2-(3-amino-3-carboxypropyl)histidine synthase complex composed of dph1, dph2, dph3 and a NADH-dependent reductase, predominantly cbr1. The cofactor is FAD.

It is found in the mitochondrion outer membrane. The enzyme catalyses 2 Fe(III)-[cytochrome b5] + NADH = 2 Fe(II)-[cytochrome b5] + NAD(+) + H(+). It catalyses the reaction 2 Fe(3+)-[Dph3] + NADH = 2 Fe(2+)-[Dph3] + NAD(+) + H(+). Its pathway is protein modification; peptidyl-diphthamide biosynthesis. Functionally, NADH-dependent reductase for dph3 and cytochrome b5. Required for the first step of diphthamide biosynthesis, a post-translational modification of histidine which occurs in elongation factor 2. Dph1 and dph2 transfer a 3-amino-3-carboxypropyl (ACP) group from S-adenosyl-L-methionine (SAM) to a histidine residue, the reaction is assisted by a reduction system comprising dph3 and a NADH-dependent reductase, predominantly cbr1. By reducing dph3, also involved in the formation of the tRNA wobble base modification mcm5s 2U (5-methoxycarbonylmethyl-2-thiouridine), mediated by the elongator complex. The cytochrome b5/NADH cytochrome b5 reductase electron transfer system supports the catalytic activity of several sterol biosynthetic enzymes. This Neosartorya fischeri (strain ATCC 1020 / DSM 3700 / CBS 544.65 / FGSC A1164 / JCM 1740 / NRRL 181 / WB 181) (Aspergillus fischerianus) protein is NADH-cytochrome b5 reductase 1 (cbr1).